The chain runs to 510 residues: Light-independent protochlorophyllide reductase subunit B (510 aa).

Aspartate 36 lines the [4Fe-4S] cluster pocket. Aspartate 296 serves as the catalytic Proton donor. A substrate-binding site is contributed by 431–432 (GM).

It belongs to the ChlB/BchB/BchZ family. As to quaternary structure, protochlorophyllide reductase is composed of three subunits; ChlL, ChlN and ChlB. Forms a heterotetramer of two ChlB and two ChlN subunits. Requires [4Fe-4S] cluster as cofactor.

Its subcellular location is the plastid. The protein resides in the chloroplast. The enzyme catalyses chlorophyllide a + oxidized 2[4Fe-4S]-[ferredoxin] + 2 ADP + 2 phosphate = protochlorophyllide a + reduced 2[4Fe-4S]-[ferredoxin] + 2 ATP + 2 H2O. It participates in porphyrin-containing compound metabolism; chlorophyll biosynthesis (light-independent). Functionally, component of the dark-operative protochlorophyllide reductase (DPOR) that uses Mg-ATP and reduced ferredoxin to reduce ring D of protochlorophyllide (Pchlide) to form chlorophyllide a (Chlide). This reaction is light-independent. The NB-protein (ChlN-ChlB) is the catalytic component of the complex. In Chlorokybus atmophyticus (Soil alga), this protein is Light-independent protochlorophyllide reductase subunit B.